The sequence spans 118 residues: Small ribosomal subunit protein uS13 (118 aa).

The tract at residues 94 to 118 (NLPVRGQNTKNNARTRKGPIRSIKR) is disordered. Positions 106 to 118 (ARTRKGPIRSIKR) are enriched in basic residues.

This sequence belongs to the universal ribosomal protein uS13 family. Part of the 30S ribosomal subunit. Forms a loose heterodimer with protein S19. Forms two bridges to the 50S subunit in the 70S ribosome.

Located at the top of the head of the 30S subunit, it contacts several helices of the 16S rRNA. In the 70S ribosome it contacts the 23S rRNA (bridge B1a) and protein L5 of the 50S subunit (bridge B1b), connecting the 2 subunits; these bridges are implicated in subunit movement. Contacts the tRNAs in the A and P-sites. The protein is Small ribosomal subunit protein uS13 of Psychrobacter sp. (strain PRwf-1).